Here is a 748-residue protein sequence, read N- to C-terminus: Histone-lysine N-methyltransferase EZH2 (748 aa).

Residues 184 to 199 (YEDDEDGDDNQDDEQD) show a composition bias toward acidic residues. 2 disordered regions span residues 184–220 (YEDD…LRKF) and 342–428 (AERI…NIEP). A compositionally biased stretch (basic and acidic residues) spans 200–220 (DTAKDQDDNMEDKETQPLRKF). A compositionally biased stretch (basic residues) spans 347-359 (TPPKRPSGRRRGR). Residues 362 to 374 (NNTSRPSTPTVNV) show a composition bias toward polar residues. The segment covering 376 to 387 (EAKDTDSDREAG) has biased composition (basic and acidic residues). One can recognise a CXC domain in the interval 505-607 (CRKIQLKKDG…SKNVSCKNCS (103 aa)). An SET domain is found at 614 to 729 (KHLLLAPSDV…TGEELFFDYR (116 aa)).

This sequence belongs to the class V-like SAM-binding methyltransferase superfamily. Histone-lysine methyltransferase family. EZ subfamily. Component of the prc2/eed-ezh2 complex.

Its subcellular location is the nucleus. It carries out the reaction L-lysyl(27)-[histone H3] + 3 S-adenosyl-L-methionine = N(6),N(6),N(6)-trimethyl-L-lysyl(27)-[histone H3] + 3 S-adenosyl-L-homocysteine + 3 H(+). Polycomb group (PcG) protein. Catalytic subunit of the prc2/eed-ezh2 complex, which methylates 'Lys-9' and 'Lys-27' of histone H3, leading to transcriptional repression of the affected target gene. May repress transcription of the egr2 and en2 genes. May regulate the circadian clock via histone methylation at the promoter of the circadian genes. The chain is Histone-lysine N-methyltransferase EZH2 (ezh2-a) from Xenopus laevis (African clawed frog).